Consider the following 486-residue polypeptide: Cobyric acid synthase (486 aa).

Positions 248-435 (VLNVVVPVLP…LHGLFESPAA (188 aa)) constitute a GATase cobBQ-type domain. The active-site Nucleophile is the C329. H427 is a catalytic residue.

This sequence belongs to the CobB/CobQ family. CobQ subfamily.

Its pathway is cofactor biosynthesis; adenosylcobalamin biosynthesis. Catalyzes amidations at positions B, D, E, and G on adenosylcobyrinic A,C-diamide. NH(2) groups are provided by glutamine, and one molecule of ATP is hydrogenolyzed for each amidation. This is Cobyric acid synthase from Pseudomonas syringae pv. tomato (strain ATCC BAA-871 / DC3000).